Reading from the N-terminus, the 379-residue chain is tRNA-specific 2-thiouridylase MnmA (379 aa).

ATP-binding positions include 23 to 30 (AMSGGVDS) and L49. C117 acts as the Nucleophile in catalysis. A disulfide bond links C117 and C214. Residue G141 coordinates ATP. Residues 163–165 (RDQ) form an interaction with tRNA region. C214 (cysteine persulfide intermediate) is an active-site residue.

This sequence belongs to the MnmA/TRMU family.

It localises to the cytoplasm. The enzyme catalyses S-sulfanyl-L-cysteinyl-[protein] + uridine(34) in tRNA + AH2 + ATP = 2-thiouridine(34) in tRNA + L-cysteinyl-[protein] + A + AMP + diphosphate + H(+). In terms of biological role, catalyzes the 2-thiolation of uridine at the wobble position (U34) of tRNA, leading to the formation of s(2)U34. In Cereibacter sphaeroides (strain KD131 / KCTC 12085) (Rhodobacter sphaeroides), this protein is tRNA-specific 2-thiouridylase MnmA.